Here is a 208-residue protein sequence, read N- to C-terminus: 3-demethoxyubiquinol 3-hydroxylase (208 aa).

Residues glutamate 57, glutamate 87, histidine 90, glutamate 139, glutamate 171, and histidine 174 each contribute to the Fe cation site.

This sequence belongs to the COQ7 family. The cofactor is Fe cation.

The protein localises to the cell membrane. The enzyme catalyses a 5-methoxy-2-methyl-3-(all-trans-polyprenyl)benzene-1,4-diol + AH2 + O2 = a 3-demethylubiquinol + A + H2O. It functions in the pathway cofactor biosynthesis; ubiquinone biosynthesis. Its function is as follows. Catalyzes the hydroxylation of 2-nonaprenyl-3-methyl-6-methoxy-1,4-benzoquinol during ubiquinone biosynthesis. The polypeptide is 3-demethoxyubiquinol 3-hydroxylase (Burkholderia multivorans (strain ATCC 17616 / 249)).